The following is a 305-amino-acid chain: MSRPRKKGRDVHGVFLLDKPQGMSSNDILQKVKRLFQANKAGHTGALDPLATGMLPICLGEATKFSQFLLDSDKRYQVTAKLGKRTDTSDAEGQVVETRAVNVGEAEIITALEQFRGDILQVPTMFSALKHNGKPLYEYARQGITVEREARPITIFELRFIEYAAPYLTLEVHCSKGTYIRTLVDDLGEVLGCGAHVTVLRRLAVANYPIEAMMSYADLQNLSENQPLEELDKYLLPLDTAVESLPKLNLTAEQTKAVGFGQRVKFENNDQIYGQVRLFSHNMQFLGVAEITTDNVIRPSRMVNI.

Residue Asp-48 is the Nucleophile of the active site.

It belongs to the pseudouridine synthase TruB family. Type 1 subfamily.

It catalyses the reaction uridine(55) in tRNA = pseudouridine(55) in tRNA. Its function is as follows. Responsible for synthesis of pseudouridine from uracil-55 in the psi GC loop of transfer RNAs. The polypeptide is tRNA pseudouridine synthase B (Actinobacillus pleuropneumoniae serotype 5b (strain L20)).